A 274-amino-acid polypeptide reads, in one-letter code: ATP synthase subunit delta (274 aa).

This sequence belongs to the ATPase delta chain family. In terms of assembly, F-type ATPases have 2 components, F(1) - the catalytic core - and F(0) - the membrane proton channel. F(1) has five subunits: alpha(3), beta(3), gamma(1), delta(1), epsilon(1). F(0) has three main subunits: a(1), b(2) and c(10-14). The alpha and beta chains form an alternating ring which encloses part of the gamma chain. F(1) is attached to F(0) by a central stalk formed by the gamma and epsilon chains, while a peripheral stalk is formed by the delta and b chains.

The protein resides in the cell membrane. F(1)F(0) ATP synthase produces ATP from ADP in the presence of a proton or sodium gradient. F-type ATPases consist of two structural domains, F(1) containing the extramembraneous catalytic core and F(0) containing the membrane proton channel, linked together by a central stalk and a peripheral stalk. During catalysis, ATP synthesis in the catalytic domain of F(1) is coupled via a rotary mechanism of the central stalk subunits to proton translocation. In terms of biological role, this protein is part of the stalk that links CF(0) to CF(1). It either transmits conformational changes from CF(0) to CF(1) or is implicated in proton conduction. This Salinispora arenicola (strain CNS-205) protein is ATP synthase subunit delta.